The chain runs to 382 residues: Mannitol-1-phosphate 5-dehydrogenase (382 aa).

3–14 (ALHFGAGNIGRG) is a binding site for NAD(+). Position 269 is an N6-acetyllysine (lysine 269).

Belongs to the mannitol dehydrogenase family.

The enzyme catalyses D-mannitol 1-phosphate + NAD(+) = beta-D-fructose 6-phosphate + NADH + H(+). The protein is Mannitol-1-phosphate 5-dehydrogenase of Escherichia coli O17:K52:H18 (strain UMN026 / ExPEC).